The sequence spans 404 residues: Phosphopentomutase (404 aa).

Residues Asp10, Asp303, His308, Asp344, His345, and His356 each contribute to the Mn(2+) site.

This sequence belongs to the phosphopentomutase family. The cofactor is Mn(2+).

Its subcellular location is the cytoplasm. The enzyme catalyses 2-deoxy-alpha-D-ribose 1-phosphate = 2-deoxy-D-ribose 5-phosphate. It carries out the reaction alpha-D-ribose 1-phosphate = D-ribose 5-phosphate. It participates in carbohydrate degradation; 2-deoxy-D-ribose 1-phosphate degradation; D-glyceraldehyde 3-phosphate and acetaldehyde from 2-deoxy-alpha-D-ribose 1-phosphate: step 1/2. Functionally, isomerase that catalyzes the conversion of deoxy-ribose 1-phosphate (dRib-1-P) and ribose 1-phosphate (Rib-1-P) to deoxy-ribose 5-phosphate (dRib-5-P) and ribose 5-phosphate (Rib-5-P), respectively. In Shewanella putrefaciens (strain CN-32 / ATCC BAA-453), this protein is Phosphopentomutase.